An 83-amino-acid polypeptide reads, in one-letter code: Putative beta-neurotoxin RjAa12f (83 aa).

The signal sequence occupies residues 1–18; that stretch reads MKILIFIIASFMLIGVEC. Residues 19–82 enclose the LCN-type CS-alpha/beta domain; it reads KEGYPMGRDG…VWDSSTNKCG (64 aa). 4 disulfides stabilise this stretch: C29-C81, C33-C55, C40-C62, and C44-C64. G83 is a propeptide.

Post-translationally, contains 4 disulfide bonds. Expressed by the venom gland.

It is found in the secreted. In terms of biological role, beta toxins bind voltage-independently at site-4 of sodium channels (Nav) and shift the voltage of activation toward more negative potentials thereby affecting sodium channel activation and promoting spontaneous and repetitive firing. This toxin is lethal to insects (A.domestica). It is not toxic to mice and does not affect mammal F11 sodium channels. The sequence is that of Putative beta-neurotoxin RjAa12f from Rhopalurus junceus (Caribbean blue scorpion).